A 451-amino-acid polypeptide reads, in one-letter code: Trigger factor (451 aa).

Positions 165 to 250 (DDKLTIDFEG…LRQIQVREAL (86 aa)) constitute a PPIase FKBP-type domain.

This sequence belongs to the FKBP-type PPIase family. Tig subfamily.

The protein localises to the cytoplasm. The catalysed reaction is [protein]-peptidylproline (omega=180) = [protein]-peptidylproline (omega=0). Its function is as follows. Involved in protein export. Acts as a chaperone by maintaining the newly synthesized protein in an open conformation. Functions as a peptidyl-prolyl cis-trans isomerase. This is Trigger factor (tig) from Helicobacter pylori (strain J99 / ATCC 700824) (Campylobacter pylori J99).